Reading from the N-terminus, the 632-residue chain is Extracellular metalloproteinase 1 (632 aa).

An N-terminal signal peptide occupies residues 1-19 (MHGLLLAAGLLSLPLRVLA). Positions 20–243 (HPQPSTSLTS…VHNVVDYVSH (224 aa)) are excised as a propeptide. The N-linked (GlcNAc...) asparagine glycan is linked to asparagine 284. Histidine 427 is a Zn(2+) binding site. The active site involves glutamate 428. Position 431 (histidine 431) interacts with Zn(2+). 2 N-linked (GlcNAc...) asparagine glycosylation sites follow: asparagine 591 and asparagine 620.

The protein belongs to the peptidase M36 family. Zn(2+) serves as cofactor.

It is found in the secreted. In terms of biological role, secreted metalloproteinase that allows assimilation of proteinaceous substrates and probably acts as a virulence factor. The polypeptide is Extracellular metalloproteinase 1 (MEP1) (Arthroderma gypseum (strain ATCC MYA-4604 / CBS 118893) (Microsporum gypseum)).